The sequence spans 101 residues: MAGQKIRIRLKAYDHEAIDASARKIVETVTRTGASVVGPVPLPTEKNVYCVIRSPHKYKDSREHFEMRTHKRLIDILDPTPKTVDALMRIDLPASVDVNIQ.

It belongs to the universal ribosomal protein uS10 family. As to quaternary structure, part of the 30S ribosomal subunit.

Involved in the binding of tRNA to the ribosomes. This Mycobacteroides abscessus (strain ATCC 19977 / DSM 44196 / CCUG 20993 / CIP 104536 / JCM 13569 / NCTC 13031 / TMC 1543 / L948) (Mycobacterium abscessus) protein is Small ribosomal subunit protein uS10.